Reading from the N-terminus, the 670-residue chain is MKGTKGKVFRVFTAFLAFVLFITAYDLTKGSEKPEDIHNTSLLRNSCFFNWLESKKTRGITMAEEKKANQLPDRSEVKAEDTWRLEDIFPSDEAWNKEFQAVKELIPNLSKYKGKLADSADHLYEALTYQDKVMERLGRLYTYAHMRSDQDTGNSFYQGLNDKAGNLYTQAASATAYLVPEILSIEEDKLQQFILEKEELKLYSHAIEEITKERPHVLSEKEEALLAEASEVLGSSSNTFSVLNNADITFPSIKDEDGNEKQITHGNFINFLESENREVRKNAFDAVYKTYGQYKNTMATTLSGTVKKDNFYARVKKYKSAREAALSNNSIPEEVYDNLVKTINKHLPLLHRYIALRKKVLELDEVHIYDLYTPLVKDAGMKVTYEEAKDYMLKGLAPLGEEYASILKEGLENRWVDVYENKGKRNGAYSSGAYGTNPYILMNWHNNVNNLFTLVHEFGHSVHSYYTRKHQPYPYGNYSIFVAEVASTTNEALLGEYLLNNLEDEKQRLYILNHMLEGFRGTVFRQTMFAEFEHLIHTKAQEGEPLTPELLTNVYYDLNKKYFGDGMVIDKEIGLEWSRIPHFYYNYYVYQYATGYSAAQALSSQILKEGKPAVDRYIDFLKAGSSQYPIDVLKKAGVDMTSPEPIEAACKMFEEKLDEMEELLMKVKQS.

His456 is a binding site for Zn(2+). The active site involves Glu457. Zn(2+) is bound by residues His460 and His463.

The protein belongs to the peptidase M3B family. Requires Zn(2+) as cofactor.

The protein resides in the cytoplasm. In terms of biological role, overexpression results in inhibition of sporulation initiation. This sporulation deficiency could be the result of hydrolysis by PepF of the PhrA peptide, a phosphatase regulator. Thus, overexpression of PepF appears to act at the level of the phosphorelay, most likely through modulation of the negative role played by phosphatases. Overexpression of PepF also affects the activity of the competence and sporulation stimulating factor PhrC. The sequence is that of Oligopeptidase PepF from Bacillus subtilis (strain 168).